We begin with the raw amino-acid sequence, 136 residues long: Small ribosomal subunit protein bS6 (136 aa).

Residues 117-130 (EERSRSSRRQREDV) are compositionally biased toward basic and acidic residues. The interval 117–136 (EERSRSSRRQREDVIEGVEL) is disordered.

It belongs to the bacterial ribosomal protein bS6 family.

In terms of biological role, binds together with bS18 to 16S ribosomal RNA. This Bartonella quintana (strain Toulouse) (Rochalimaea quintana) protein is Small ribosomal subunit protein bS6.